Consider the following 120-residue polypeptide: Meiosis expressed gene 1 protein homolog (120 aa).

The interval 1–45 is disordered; it reads MDGLAIGGVSAPMTAERPQQVKKQLSRRTPDAADGRKPTRMERAK. Residues 28–45 are compositionally biased toward basic and acidic residues; that stretch reads RTPDAADGRKPTRMERAK.

It belongs to the MEIG1 family.

The sequence is that of Meiosis expressed gene 1 protein homolog from Oxyrrhis marina (Dinoflagellate).